The following is a 342-amino-acid chain: S-adenosylmethionine:tRNA ribosyltransferase-isomerase (342 aa).

Belongs to the QueA family. As to quaternary structure, monomer.

The protein resides in the cytoplasm. The enzyme catalyses 7-aminomethyl-7-carbaguanosine(34) in tRNA + S-adenosyl-L-methionine = epoxyqueuosine(34) in tRNA + adenine + L-methionine + 2 H(+). Its pathway is tRNA modification; tRNA-queuosine biosynthesis. Transfers and isomerizes the ribose moiety from AdoMet to the 7-aminomethyl group of 7-deazaguanine (preQ1-tRNA) to give epoxyqueuosine (oQ-tRNA). The sequence is that of S-adenosylmethionine:tRNA ribosyltransferase-isomerase from Streptococcus mutans serotype c (strain ATCC 700610 / UA159).